The sequence spans 310 residues: Carbamate kinase 1 (310 aa).

The protein belongs to the carbamate kinase family.

It is found in the cytoplasm. It carries out the reaction hydrogencarbonate + NH4(+) + ATP = carbamoyl phosphate + ADP + H2O + H(+). It participates in metabolic intermediate metabolism; carbamoyl phosphate degradation; CO(2) and NH(3) from carbamoyl phosphate: step 1/1. The chain is Carbamate kinase 1 (arcC1) from Staphylococcus aureus (strain bovine RF122 / ET3-1).